The sequence spans 429 residues: 4-hydroxybutyrate coenzyme A transferase (429 aa).

A CoA-binding site is contributed by 215–219; that stretch reads GIGAI. Glu-238 acts as the 5-glutamyl coenzyme A thioester intermediate in catalysis. Residue Gly-336 participates in CoA binding.

This sequence belongs to the acetyl-CoA hydrolase/transferase family.

This chain is 4-hydroxybutyrate coenzyme A transferase (cat2), found in Clostridium kluyveri (strain ATCC 8527 / DSM 555 / NBRC 12016 / NCIMB 10680 / K1).